Reading from the N-terminus, the 154-residue chain is ATP synthase subunit b', chloroplastic (154 aa).

A helical transmembrane segment spans residues 22 to 42; sequence GTLPLIAIQFLILMFLLNILL.

The protein belongs to the ATPase B chain family. F-type ATPases have 2 components, F(1) - the catalytic core - and F(0) - the membrane proton channel. F(1) has five subunits: alpha(3), beta(3), gamma(1), delta(1), epsilon(1). F(0) has four main subunits: a(1), b(1), b'(1) and c(10-14). The alpha and beta chains form an alternating ring which encloses part of the gamma chain. F(1) is attached to F(0) by a central stalk formed by the gamma and epsilon chains, while a peripheral stalk is formed by the delta, b and b' chains.

The protein localises to the plastid. Its subcellular location is the chloroplast thylakoid membrane. F(1)F(0) ATP synthase produces ATP from ADP in the presence of a proton or sodium gradient. F-type ATPases consist of two structural domains, F(1) containing the extramembraneous catalytic core and F(0) containing the membrane proton channel, linked together by a central stalk and a peripheral stalk. During catalysis, ATP synthesis in the catalytic domain of F(1) is coupled via a rotary mechanism of the central stalk subunits to proton translocation. Its function is as follows. Component of the F(0) channel, it forms part of the peripheral stalk, linking F(1) to F(0). The b'-subunit is a diverged and duplicated form of b found in plants and photosynthetic bacteria. This is ATP synthase subunit b', chloroplastic from Vaucheria litorea (Yellow-green alga).